A 486-amino-acid chain; its full sequence is Cardiolipin synthase A (486 aa).

Helical transmembrane passes span 3-23 and 38-58; these read TFYT…IAGV and MTWL…YFAF. 2 PLD phosphodiesterase domains span residues 219–246 and 399–426; these read MDLR…VDPR and EDGL…DMRS. Active-site residues include histidine 224, lysine 226, aspartate 231, histidine 404, lysine 406, and aspartate 411.

Belongs to the phospholipase D family. Cardiolipin synthase subfamily. ClsA sub-subfamily.

It localises to the cell inner membrane. The catalysed reaction is 2 a 1,2-diacyl-sn-glycero-3-phospho-(1'-sn-glycerol) = a cardiolipin + glycerol. Functionally, catalyzes the reversible phosphatidyl group transfer from one phosphatidylglycerol molecule to another to form cardiolipin (CL) (diphosphatidylglycerol) and glycerol. This is Cardiolipin synthase A from Proteus mirabilis (strain HI4320).